Consider the following 174-residue polypeptide: Transcription factor bHLH168 (174 aa).

Residues 14 to 63 enclose the bHLH domain; that stretch reads SLREQRNLREKERRMRMKHLFSILSSHVSPTRRLPVPQLIDQAVSYMIQL.

It belongs to the bHLH protein family.

The protein localises to the nucleus. The chain is Transcription factor bHLH168 from Arabidopsis thaliana (Mouse-ear cress).